The primary structure comprises 193 residues: Interferon type A1/A2 (193 aa).

An N-terminal signal peptide occupies residues 1-31 (MAVPASPQHPRGYGILLLTLLLKALATTASA). Cystine bridges form between cysteine 32-cysteine 129, cysteine 61-cysteine 155, and cysteine 68-cysteine 168. Residues asparagine 65, asparagine 71, asparagine 108, and asparagine 186 are each glycosylated (N-linked (GlcNAc...) asparagine).

This sequence belongs to the alpha/beta interferon family.

The protein resides in the secreted. Functionally, has antiviral activities. The polypeptide is Interferon type A1/A2 (IFNA1) (Gallus gallus (Chicken)).